A 95-amino-acid polypeptide reads, in one-letter code: Small ribosomal subunit protein bS6 (95 aa).

It belongs to the bacterial ribosomal protein bS6 family.

Functionally, binds together with bS18 to 16S ribosomal RNA. This Corynebacterium glutamicum (strain ATCC 13032 / DSM 20300 / JCM 1318 / BCRC 11384 / CCUG 27702 / LMG 3730 / NBRC 12168 / NCIMB 10025 / NRRL B-2784 / 534) protein is Small ribosomal subunit protein bS6.